Reading from the N-terminus, the 408-residue chain is Lysosome-associated membrane glycoprotein 3 (408 aa).

The N-terminal stretch at 1–20 (MPGQTSAVAVLLCLAVILHG) is a signal peptide. Residues 21–373 (YQIREKEFPE…IVDECLSDYT (353 aa)) are Lumenal-facing. N-linked (GlcNAc...) asparagine glycans are attached at residues asparagine 55 and asparagine 225. Residues cysteine 230 and cysteine 267 are joined by a disulfide bond. Asparagine 284 carries N-linked (GlcNAc...) asparagine glycosylation. The cysteines at positions 331 and 368 are disulfide-linked. Residues 374-394 (VVLPVVGIIVVVLCVVGLGIY) traverse the membrane as a helical segment. The Cytoplasmic portion of the chain corresponds to 395–408 (KIRQRRQSSAYQRI).

This sequence belongs to the LAMP family. Monomer. Interacts with FURIN.

It localises to the cell surface. The protein localises to the lysosome membrane. The protein resides in the cytoplasmic vesicle membrane. Its subcellular location is the early endosome membrane. Its function is as follows. Lysosomal membrane glycoprotein which plays a role in the unfolded protein response (UPR) that contributes to protein degradation and cell survival during proteasomal dysfunction. Plays a role in the process of fusion of the lysosome with the autophagosome, thereby modulating the autophagic process. Promotes hepatocellular lipogenesis through activation of the PI3K/Akt pathway. May also play a role in dendritic cell function and in adaptive immunity. This is Lysosome-associated membrane glycoprotein 3 (Lamp3) from Rattus norvegicus (Rat).